The chain runs to 228 residues: Lactate utilization protein A (228 aa).

This sequence belongs to the LutA/YkgE family.

Is involved in L-lactate degradation and allows cells to grow with lactate as the sole carbon source. In Lysinibacillus sphaericus (strain C3-41), this protein is Lactate utilization protein A.